Reading from the N-terminus, the 870-residue chain is Protein translocase subunit SecA (870 aa).

ATP-binding positions include Gln-86, 104–108 (GEGKT), and Asp-499. Residues Cys-854, Cys-856, Cys-865, and His-866 each coordinate Zn(2+).

This sequence belongs to the SecA family. Monomer and homodimer. Part of the essential Sec protein translocation apparatus which comprises SecA, SecYEG and auxiliary proteins SecDF-YajC and YidC. The cofactor is Zn(2+).

Its subcellular location is the cell inner membrane. The protein localises to the cytoplasm. It catalyses the reaction ATP + H2O + cellular proteinSide 1 = ADP + phosphate + cellular proteinSide 2.. Functionally, part of the Sec protein translocase complex. Interacts with the SecYEG preprotein conducting channel. Has a central role in coupling the hydrolysis of ATP to the transfer of proteins into and across the cell membrane, serving both as a receptor for the preprotein-SecB complex and as an ATP-driven molecular motor driving the stepwise translocation of polypeptide chains across the membrane. This is Protein translocase subunit SecA from Ehrlichia ruminantium (strain Welgevonden).